We begin with the raw amino-acid sequence, 95 residues long: MALQRSDVEKIAHLARLGLNEGELPRITDALNSILGLVDQMQAVDTTGIEPLAHPLETTQRLRPDQVTESNQRDRYQAVAPSTENGLYLVPKVID.

The protein belongs to the GatC family. As to quaternary structure, heterotrimer of A, B and C subunits.

It carries out the reaction L-glutamyl-tRNA(Gln) + L-glutamine + ATP + H2O = L-glutaminyl-tRNA(Gln) + L-glutamate + ADP + phosphate + H(+). It catalyses the reaction L-aspartyl-tRNA(Asn) + L-glutamine + ATP + H2O = L-asparaginyl-tRNA(Asn) + L-glutamate + ADP + phosphate + 2 H(+). Allows the formation of correctly charged Asn-tRNA(Asn) or Gln-tRNA(Gln) through the transamidation of misacylated Asp-tRNA(Asn) or Glu-tRNA(Gln) in organisms which lack either or both of asparaginyl-tRNA or glutaminyl-tRNA synthetases. The reaction takes place in the presence of glutamine and ATP through an activated phospho-Asp-tRNA(Asn) or phospho-Glu-tRNA(Gln). The protein is Aspartyl/glutamyl-tRNA(Asn/Gln) amidotransferase subunit C of Pseudomonas entomophila (strain L48).